A 198-amino-acid chain; its full sequence is MLYPTPIAKLIDSFSKLPGIGIKTATRLAFYTIGMSDDDVNEFAKNLLAAKRELSYCSVCGNLTDEDPCAICQDQSRDQSTILIVEDSRDVSAMENIQEYHGLYHVLHGLISPMNGVGPDDINLKSLITRLMDSEVTEVIVATNATADGEATSMYISRVLKPAGIKVTRLARGLAVGSDIEYADEVTLIRAIENRTEL.

The segment at cysteine 57–cysteine 72 adopts a C4-type zinc-finger fold. Residues serine 80–alanine 175 form the Toprim domain.

Belongs to the RecR family.

Functionally, may play a role in DNA repair. It seems to be involved in an RecBC-independent recombinational process of DNA repair. It may act with RecF and RecO. This chain is Recombination protein RecR, found in Streptococcus sanguinis (strain SK36).